The chain runs to 427 residues: Trigger factor (427 aa).

The PPIase FKBP-type domain occupies 163-248; sequence GDTVVIDFVG…IHEVKAKEVP (86 aa).

Belongs to the FKBP-type PPIase family. Tig subfamily.

The protein resides in the cytoplasm. It carries out the reaction [protein]-peptidylproline (omega=180) = [protein]-peptidylproline (omega=0). Functionally, involved in protein export. Acts as a chaperone by maintaining the newly synthesized protein in an open conformation. Functions as a peptidyl-prolyl cis-trans isomerase. In Streptococcus suis (strain 98HAH33), this protein is Trigger factor.